The chain runs to 66 residues: Large ribosomal subunit protein bL35 (66 aa).

It belongs to the bacterial ribosomal protein bL35 family.

This Brucella melitensis biotype 1 (strain ATCC 23456 / CCUG 17765 / NCTC 10094 / 16M) protein is Large ribosomal subunit protein bL35.